The primary structure comprises 215 residues: Calmodulin-like protein 5 (215 aa).

Residues 38–61 are disordered; the sequence is KNSPPSPSTMLPSPSSSSAPTKRI. The span at 45 to 57 shows a compositional bias: low complexity; sequence STMLPSPSSSSAP. EF-hand domains lie at 61–96, 97–132, 139–174, and 177–212; these read IDPSELKRVFQMFDKNGDGRITKEELNDSLENLGIY, IPDKDLTQMIHKIDANGDGCVDIDEFESLYSSIVDE, TEEEDMKDAFNVFDQDGDGFITVEELKSVMASLGLK, and KTLDGCKKMIMQVDADGDGRVNYKEFLQMMKGGGFS. Residues D74, N76, D78, R80, E85, D110, N112, D114, C116, E121, D152, D154, D156, E163, D190, D192, D194, R196, and E201 each contribute to the Ca(2+) site.

The protein belongs to the calmodulin family.

Its function is as follows. Potential calcium sensor. This is Calmodulin-like protein 5 (CML5) from Arabidopsis thaliana (Mouse-ear cress).